Here is a 275-residue protein sequence, read N- to C-terminus: Rhamnulose-1-phosphate aldolase (275 aa).

E117 is an active-site residue. Zn(2+) is bound by residues H141, H143, and H212.

This sequence belongs to the aldolase class II family. RhaD subfamily. As to quaternary structure, homotetramer. Requires Zn(2+) as cofactor.

It localises to the cytoplasm. It catalyses the reaction L-rhamnulose 1-phosphate = (S)-lactaldehyde + dihydroxyacetone phosphate. It participates in carbohydrate degradation; L-rhamnose degradation; glycerone phosphate from L-rhamnose: step 3/3. In terms of biological role, catalyzes the reversible cleavage of L-rhamnulose-1-phosphate to dihydroxyacetone phosphate (DHAP) and L-lactaldehyde. The sequence is that of Rhamnulose-1-phosphate aldolase from Salmonella paratyphi C (strain RKS4594).